We begin with the raw amino-acid sequence, 334 residues long: MQTEQLISQLFDGQHLNQEQIQQLFHYIIQGQLSNEQLAGVLIALKFRGEQTDEISGAVKAIIANAKPFPFIDYPFADIVGTGGDNANTINISTTAAIVAATLGYKVVKHGNRSVSSKSGASDVLNALGIKIDLSAEKSKQALDNLNLCFLWAQQYHLGFKHVAPVRQILKTRTIFNILGPLCNPARPKHQLLGVYTPHLLKIYAESALRLGHQHSIVIHGSGLDEVAIHGKTDVAEICHGKIEYYSLTPHDFGFTPKPLETLRGGTAEENAKILTALLQGKGKDEHNQAVAMNTALLMKLFGNDDIKANAEKALNIMANGKAFETLNQLKLYQ.

5-phospho-alpha-D-ribose 1-diphosphate-binding positions include G81, 84 to 85 (GD), T89, 91 to 94 (NIST), 109 to 117 (KHGNRSVSS), and A121. G81 is a binding site for anthranilate. A Mg(2+)-binding site is contributed by S93. N112 lines the anthranilate pocket. Position 167 (R167) interacts with anthranilate. Residues D225 and E226 each coordinate Mg(2+).

This sequence belongs to the anthranilate phosphoribosyltransferase family. As to quaternary structure, homodimer. The cofactor is Mg(2+).

The catalysed reaction is N-(5-phospho-beta-D-ribosyl)anthranilate + diphosphate = 5-phospho-alpha-D-ribose 1-diphosphate + anthranilate. It participates in amino-acid biosynthesis; L-tryptophan biosynthesis; L-tryptophan from chorismate: step 2/5. Catalyzes the transfer of the phosphoribosyl group of 5-phosphorylribose-1-pyrophosphate (PRPP) to anthranilate to yield N-(5'-phosphoribosyl)-anthranilate (PRA). The protein is Anthranilate phosphoribosyltransferase of Histophilus somni (strain 2336) (Haemophilus somnus).